The chain runs to 191 residues: MEAQSATETQKNLKTLMELIKTKRPFKSSDFDTLNLDYLSGQSNEELFKLLIDAINGMKENVAKVNEYLTEEGDHSLSGDELLKFVYKELVYDDESEFDKEKLQKLYKTFSEDSNAFATLQSYIQYLQPEENSQRWIQVHEPVKHRRRLNHNPALQEISMDSRVQPSQLDLHSPFRDCLSLLSATSFLSAF.

This chain is Gene BABR protein 1, found in Babesia bovis.